The chain runs to 94 residues: Aspartyl/glutamyl-tRNA(Asn/Gln) amidotransferase subunit C (94 aa).

This sequence belongs to the GatC family. As to quaternary structure, heterotrimer of A, B and C subunits.

The catalysed reaction is L-glutamyl-tRNA(Gln) + L-glutamine + ATP + H2O = L-glutaminyl-tRNA(Gln) + L-glutamate + ADP + phosphate + H(+). The enzyme catalyses L-aspartyl-tRNA(Asn) + L-glutamine + ATP + H2O = L-asparaginyl-tRNA(Asn) + L-glutamate + ADP + phosphate + 2 H(+). Functionally, allows the formation of correctly charged Asn-tRNA(Asn) or Gln-tRNA(Gln) through the transamidation of misacylated Asp-tRNA(Asn) or Glu-tRNA(Gln) in organisms which lack either or both of asparaginyl-tRNA or glutaminyl-tRNA synthetases. The reaction takes place in the presence of glutamine and ATP through an activated phospho-Asp-tRNA(Asn) or phospho-Glu-tRNA(Gln). In Caldicellulosiruptor bescii (strain ATCC BAA-1888 / DSM 6725 / KCTC 15123 / Z-1320) (Anaerocellum thermophilum), this protein is Aspartyl/glutamyl-tRNA(Asn/Gln) amidotransferase subunit C.